Consider the following 462-residue polypeptide: Zinc transporter 6-B (462 aa).

At 1-33 (MGTIYLFRKTQRSLLGKLTQEFRLVTADRRSWK) the chain is on the cytoplasmic side. The helical transmembrane segment at 34–54 (ILLFGAINVVCTGFLLTWCSS) threads the bilayer. Residues 55–64 (TNSMALTAYT) are Extracellular-facing. Residues 65-85 (YLTIFDLFSLITSLISYWVMM) traverse the membrane as a helical segment. Residues 86–98 (KKPSPTYSFGFER) lie on the Cytoplasmic side of the membrane. A helical membrane pass occupies residues 99–119 (LEVLAVFASTVLAQLGALFIL). At 120-134 (KESAERFLEQPEIHT) the chain is on the extracellular side. Residues 135–155 (GRLLVGTFVALFFNLFTMLSI) form a helical membrane-spanning segment. Topologically, residues 156–200 (RNKPFAYVSEAASTSWLQEHVADLSRSLCGVIPGLSSIFLPRMNP) are cytoplasmic. The helical transmembrane segment at 201-221 (FVLIDIAGALALCITYMLIEI) threads the bilayer. The Extracellular portion of the chain corresponds to 222 to 223 (NN). A helical membrane pass occupies residues 224-244 (YFAVDTASAIAIAVMTFGTMY). Over 245–462 (PMSVYSGKVL…TPGQFTQFRQ (218 aa)) the chain is Cytoplasmic.

The protein belongs to the cation diffusion facilitator (CDF) transporter (TC 2.A.4) family. SLC30A subfamily. As to quaternary structure, heterodimer with SLC30A5; form a functional zinc ion transmembrane transporter.

The protein localises to the golgi apparatus. It localises to the trans-Golgi network membrane. Has probably no intrinsic transporter activity but together with SLC30A5 forms a functional zinc ion:proton antiporter heterodimer, mediating zinc entry into the lumen of organelles along the secretory pathway. As part of that zinc ion:proton antiporter, contributes to zinc ion homeostasis within the early secretory pathway and regulates the activation and folding of enzymes like alkaline phosphatases and enzymes involved in phosphatidylinositol glycan anchor biosynthesis. The sequence is that of Zinc transporter 6-B (slc30a6-b) from Xenopus laevis (African clawed frog).